The chain runs to 445 residues: Phosphoglucosamine mutase (445 aa).

Ser102 functions as the Phosphoserine intermediate in the catalytic mechanism. Mg(2+) is bound by residues Ser102, Asp241, Asp243, and Asp245. Ser102 carries the post-translational modification Phosphoserine.

This sequence belongs to the phosphohexose mutase family. The cofactor is Mg(2+). Post-translationally, activated by phosphorylation.

It carries out the reaction alpha-D-glucosamine 1-phosphate = D-glucosamine 6-phosphate. In terms of biological role, catalyzes the conversion of glucosamine-6-phosphate to glucosamine-1-phosphate. This is Phosphoglucosamine mutase from Escherichia coli O81 (strain ED1a).